A 472-amino-acid polypeptide reads, in one-letter code: Glutamate--tRNA ligase 1 (472 aa).

A 'HIGH' region motif is present at residues 13–23 (PSPTGYLHIGG). Zn(2+) is bound by residues C102, C104, C129, and E131. Residues 239 to 243 (RLSKR) carry the 'KMSKS' region motif. K242 contributes to the ATP binding site.

Belongs to the class-I aminoacyl-tRNA synthetase family. Glutamate--tRNA ligase type 1 subfamily. Monomer. Requires Zn(2+) as cofactor.

Its subcellular location is the cytoplasm. It catalyses the reaction tRNA(Glu) + L-glutamate + ATP = L-glutamyl-tRNA(Glu) + AMP + diphosphate. Catalyzes the attachment of glutamate to tRNA(Glu) in a two-step reaction: glutamate is first activated by ATP to form Glu-AMP and then transferred to the acceptor end of tRNA(Glu). The chain is Glutamate--tRNA ligase 1 from Syntrophus aciditrophicus (strain SB).